Consider the following 510-residue polypeptide: Glycogen synthase (510 aa).

Residue Lys18 participates in ADP-alpha-D-glucose binding.

The protein belongs to the glycosyltransferase 1 family. Bacterial/plant glycogen synthase subfamily.

It carries out the reaction [(1-&gt;4)-alpha-D-glucosyl](n) + ADP-alpha-D-glucose = [(1-&gt;4)-alpha-D-glucosyl](n+1) + ADP + H(+). Its pathway is glycan biosynthesis; glycogen biosynthesis. Functionally, synthesizes alpha-1,4-glucan chains using ADP-glucose. The protein is Glycogen synthase of Bordetella parapertussis (strain 12822 / ATCC BAA-587 / NCTC 13253).